Consider the following 65-residue polypeptide: Beta-defensin 106A (65 aa).

A signal peptide spans 1–20; that stretch reads MRTFLFLFAVLFFLTPAKNE. 3 cysteine pairs are disulfide-bonded: Cys26–Cys53, Cys33–Cys47, and Cys37–Cys54.

Belongs to the beta-defensin family. As to quaternary structure, monomer. Interacts with CCR2 (via extracellular N-terminal region); this interaction may preferentially require specific tyrosine sulfation on CCR2.

Its subcellular location is the secreted. The protein localises to the membrane. Functionally, has antibacterial activity. Acts as a ligand for C-C chemokine receptor CCR2. In Pongo pygmaeus (Bornean orangutan), this protein is Beta-defensin 106A (DEFB106A).